Here is a 276-residue protein sequence, read N- to C-terminus: NH(3)-dependent NAD(+) synthetase (276 aa).

46–53 (GISGGQDS) is a binding site for ATP. D52 is a Mg(2+) binding site. R140 is a deamido-NAD(+) binding site. ATP is bound at residue T160. E165 serves as a coordination point for Mg(2+). Residues K173 and D180 each contribute to the deamido-NAD(+) site. Residues K189 and T211 each coordinate ATP. 260–261 (HK) contacts deamido-NAD(+).

The protein belongs to the NAD synthetase family. Homodimer.

The enzyme catalyses deamido-NAD(+) + NH4(+) + ATP = AMP + diphosphate + NAD(+) + H(+). The protein operates within cofactor biosynthesis; NAD(+) biosynthesis; NAD(+) from deamido-NAD(+) (ammonia route): step 1/1. Its function is as follows. Catalyzes the ATP-dependent amidation of deamido-NAD to form NAD. Uses ammonia as a nitrogen source. The chain is NH(3)-dependent NAD(+) synthetase from Citrobacter koseri (strain ATCC BAA-895 / CDC 4225-83 / SGSC4696).